A 269-amino-acid chain; its full sequence is 3-methyl-2-oxobutanoate hydroxymethyltransferase (269 aa).

2 residues coordinate Mg(2+): aspartate 50 and aspartate 89. 3-methyl-2-oxobutanoate-binding positions include 50 to 51, aspartate 89, and lysine 118; that span reads DS. Position 120 (glutamate 120) interacts with Mg(2+). The Proton acceptor role is filled by glutamate 187.

Belongs to the PanB family. Homodecamer; pentamer of dimers. Mg(2+) serves as cofactor.

The protein resides in the cytoplasm. It catalyses the reaction 3-methyl-2-oxobutanoate + (6R)-5,10-methylene-5,6,7,8-tetrahydrofolate + H2O = 2-dehydropantoate + (6S)-5,6,7,8-tetrahydrofolate. It functions in the pathway cofactor biosynthesis; (R)-pantothenate biosynthesis; (R)-pantoate from 3-methyl-2-oxobutanoate: step 1/2. Its function is as follows. Catalyzes the reversible reaction in which hydroxymethyl group from 5,10-methylenetetrahydrofolate is transferred onto alpha-ketoisovalerate to form ketopantoate. This chain is 3-methyl-2-oxobutanoate hydroxymethyltransferase, found in Nitrosomonas eutropha (strain DSM 101675 / C91 / Nm57).